Consider the following 300-residue polypeptide: Cell surface glycoprotein CD200 receptor 1-A (300 aa).

An N-terminal signal peptide occupies residues 1–24 (MEIAGKAVCVFLLLAIIKLRRSEG). In terms of domain architecture, Ig-like V-type spans 25–124 (INRVSANLGH…GNFHRLYHLT (100 aa)). At 25–213 (INRVSANLGH…SINCSSSYRD (189 aa)) the chain is on the extracellular side. Intrachain disulfides connect Cys40–Cys108 and Cys143–Cys192. Asn45, Asn76, Asn105, Asn171, Asn200, and Asn206 each carry an N-linked (GlcNAc...) asparagine glycan. An Ig-like C2-type domain is found at 122 to 206 (HLTVIVAPRM…ATLNETKSIN (85 aa)). The helical transmembrane segment at 214-234 (LILCIAIILSFLIIITFMAVI) threads the bilayer. The Cytoplasmic segment spans residues 235–300 (YYLKLHGCRF…NLPQGQSPAT (66 aa)).

The protein belongs to the CD200R family. In terms of processing, glycosylated. Post-translationally, phosphorylated. In terms of tissue distribution, highly expressed in macrophages, peripheral blood lymphocytes (PBL) and peripheral blood mononuclear cells (PBMC). Weakly expressed in bursa, thymus, spleen, liver and brain.

The protein localises to the membrane. Its subcellular location is the secreted. In Gallus gallus (Chicken), this protein is Cell surface glycoprotein CD200 receptor 1-A (CD200R1A).